We begin with the raw amino-acid sequence, 428 residues long: E3 ubiquitin-protein ligase RNF128 (428 aa).

Residues 1–38 (MGPPPGAGVSCRGGCGFSRLLAWCFLLALSPQAPGSRG) form the signal peptide. N-linked (GlcNAc...) asparagine glycans are attached at residues Asn-48, Asn-59, and Asn-101. The region spanning 75-183 (SPLEPVAGVL…LKGTKILQSI (109 aa)) is the PA domain. Residues 208–228 (IFFVSVSFFIITAATVGYFIF) form a helical membrane-spanning segment. An RING-type; atypical zinc finger spans residues 277–318 (CAVCIELYKPNDLVRILTCNHIFHKTCVDPWLLEHRTCPMCK). The segment at 346 to 428 (ISNSASSHEE…QETAVREIKS (83 aa)) is disordered. Over residues 360–371 (ETASSGYASVQG) the composition is skewed to polar residues.

In terms of processing, auto-ubiquitinated. Controls the development of T-cell clonal anergy by ubiquitination.

It localises to the cytoplasm. Its subcellular location is the endomembrane system. It is found in the cytoskeleton. The protein localises to the perinuclear region. It catalyses the reaction S-ubiquitinyl-[E2 ubiquitin-conjugating enzyme]-L-cysteine + [acceptor protein]-L-lysine = [E2 ubiquitin-conjugating enzyme]-L-cysteine + N(6)-ubiquitinyl-[acceptor protein]-L-lysine.. Its pathway is protein modification; protein ubiquitination. E3 ubiquitin-protein ligase that catalyzes 'Lys-27', 'Lys-48'- or 'Lys-63'-linked polyubiquitin chains formation and plays a role in different biological processes such as modulation of immune response, cytoskeletal dynamics or protein homeostasis. Inhibits IL2 and IL4 transcription, thereby playing an important role in the induction of the anergic phenotype, a long-term stable state of T-lymphocyte unresponsiveness to antigenic stimulation associated with the blockade of interleukin production. Ubiquitinates ARPC5 with 'Lys-48' linkages and COR1A with 'Lys-63' linkages leading to their degradation, down-regulation of these cytoskeletal components results in impaired lamellipodium formation and reduced accumulation of F-actin at the immunological synapse. Functions in the patterning of the dorsal ectoderm; sensitizes ectoderm to respond to neural-inducing signals. Plays a positive role in innate immune response by promoting 'Lys-63'-linked ubiquitination of TBK1 after RNA- or DNA-virus infection. Regulates alveolar macrophage activation and neutrophil infiltration by interacting with TLR4, targeting it for degradation, and inhibiting NF-kappa-B activation, hence decreasing pro-inflammatory cytokines. Negatively regulates the IL-3/STAT5 signaling pathway by facilitating 'Lys-27'-linked polyubiquitination of IL3RA leading to its degradation via lysosomal pathway. Directly regulates the N-glycosylation process in the endoplasmic reticulum by targeting the glycosyl-transferase RPN1 for ubiquitination and degradation. Other substrates targeted for degradation by RNF128 include transmembrane proteins CD40L, CD83 or the tetraspanin CD151. The protein is E3 ubiquitin-protein ligase RNF128 (RNF128) of Homo sapiens (Human).